The chain runs to 138 residues: Actophorin (138 aa).

At serine 2 the chain carries Blocked amino end (Ser). The ADF-H domain occupies 3–134; sequence GIAVSDDCVQ…SEDAVSERAK (132 aa).

The protein belongs to the actin-binding proteins ADF family. Monomer.

It localises to the cytoplasm. Its function is as follows. Forms a one to one complex with monomeric actin. Can regulate the pool available for polymerization. Severs actin filaments in a dose-dependent manner. This Acanthamoeba castellanii (Amoeba) protein is Actophorin.